The sequence spans 913 residues: Cadherin-4 (913 aa).

Positions 1-20 are cleaved as a signal peptide; sequence MTTGSVLPLLLLGLSGALRA. Residues 21–166 constitute a propeptide that is removed on maturation; that stretch reads HREDLTVREA…SSGGLRRQKR (146 aa). A glycan (N-linked (GlcNAc...) asparagine) is linked at Asn146. Cadherin domains lie at 167–274, 275–389, 390–504, 505–610, and 611–721; these read DWVI…RPEF, INQV…PPEF, TTST…APYF, PSNH…DNAP, and QLLP…TVGA. The Extracellular portion of the chain corresponds to 167 to 731; that stretch reads DWVIPPINVP…VAAAGLGTGA (565 aa). N-linked (GlcNAc...) asparagine glycans are attached at residues Asn280, Asn409, Asn554, Asn629, Asn658, and Asn699. A helical transmembrane segment spans residues 732–753; sequence IVAILICIVILLIMVLLFVVWM. The Cytoplasmic portion of the chain corresponds to 754–913; sequence KRREKERHTK…ADMYGGGEED (160 aa).

Distributed widely in mouse tissues with high levels present in brain, skeletal muscle and thymus.

It localises to the cell membrane. Cadherins are calcium-dependent cell adhesion proteins. They preferentially interact with themselves in a homophilic manner in connecting cells; cadherins may thus contribute to the sorting of heterogeneous cell types. May play an important role in retinal development. This Mus musculus (Mouse) protein is Cadherin-4 (Cdh4).